A 966-amino-acid chain; its full sequence is C4 phosphoenolpyruvate carboxylase (966 aa).

Serine 11 bears the Phosphoserine mark. Histidine 172 is a catalytic residue. The D-glucose 6-phosphate site is built by tryptophan 283, arginine 450, and aspartate 597. Residue lysine 600 is part of the active site. A D-glucose 6-phosphate-binding site is contributed by arginine 635. Residue arginine 641 is part of the active site. Arginine 641 is a binding site for L-aspartate. D-glucose 6-phosphate is bound at residue threonine 665. Position 673 (glutamine 673) interacts with L-aspartate. Residues arginine 753 and arginine 767–isoleucine 769 each bind D-glucose 6-phosphate. L-aspartate contacts are provided by lysine 829, arginine 888, and asparagine 964.

It belongs to the PEPCase type 1 family. In terms of assembly, homotetramer. The cofactor is Mg(2+). As to expression, expressed in mesophyll cells, but not in bundle-sheath, roots, stems and flowers.

It is found in the cytoplasm. The enzyme catalyses oxaloacetate + phosphate = phosphoenolpyruvate + hydrogencarbonate. Its pathway is photosynthesis; C4 acid pathway. Its activity is regulated as follows. 5 fold activation by the allosteric regulator glucose-6-phosphate. Low sensitivity to inhibition by L-malate and L-aspartate. Up-regulated by light-reversible phosphorylation. Its function is as follows. Forms oxaloacetate through the carboxylation of phosphoenolpyruvate (PEP). Catalyzes the first step of C4 photosynthesis. The polypeptide is C4 phosphoenolpyruvate carboxylase (Flaveria trinervia (Clustered yellowtops)).